The primary structure comprises 126 residues: 3-aminobutyryl-CoA ammonia lyase (126 aa).

Belongs to the KAL family. As to quaternary structure, homohexamer.

The catalysed reaction is (3S)-3-aminobutanoyl-CoA = (2E)-butenoyl-CoA + NH4(+). The protein operates within amino-acid degradation; L-lysine degradation via acetate pathway. In terms of biological role, involved in the anaerobic fermentation of lysine. Catalyzes the deamination of L-3-aminobutyryl-CoA to produce crotonoyl-CoA. The polypeptide is 3-aminobutyryl-CoA ammonia lyase (Acetoanaerobium sticklandii (strain ATCC 12662 / DSM 519 / JCM 1433 / CCUG 9281 / NCIMB 10654 / HF) (Clostridium sticklandii)).